Consider the following 427-residue polypeptide: Adenylosuccinate synthetase (427 aa).

Residues 12–18 (GDEGKGK) and 40–42 (GHT) contribute to the GTP site. Catalysis depends on aspartate 13, which acts as the Proton acceptor. Residues aspartate 13 and glycine 40 each coordinate Mg(2+). IMP is bound by residues 13 to 16 (DEGK), 38 to 41 (NAGH), threonine 128, arginine 142, glutamine 223, threonine 238, and arginine 302. Histidine 41 (proton donor) is an active-site residue. 298–304 (TTTGRPR) contacts substrate. Residues arginine 304, 330–332 (SID), and 412–414 (SVG) each bind GTP.

The protein belongs to the adenylosuccinate synthetase family. As to quaternary structure, homodimer. It depends on Mg(2+) as a cofactor.

It localises to the cytoplasm. The enzyme catalyses IMP + L-aspartate + GTP = N(6)-(1,2-dicarboxyethyl)-AMP + GDP + phosphate + 2 H(+). It functions in the pathway purine metabolism; AMP biosynthesis via de novo pathway; AMP from IMP: step 1/2. In terms of biological role, plays an important role in the de novo pathway of purine nucleotide biosynthesis. Catalyzes the first committed step in the biosynthesis of AMP from IMP. The protein is Adenylosuccinate synthetase of Staphylococcus epidermidis (strain ATCC 35984 / DSM 28319 / BCRC 17069 / CCUG 31568 / BM 3577 / RP62A).